Here is a 110-residue protein sequence, read N- to C-terminus: Class I hydrophobin 2 (110 aa).

The signal sequence occupies residues 1–17 (MQFKFLTTVALATLAVA). 4 cysteine pairs are disulfide-bonded: Cys-28-Cys-89, Cys-36-Cys-83, Cys-37-Cys-71, and Cys-90-Cys-103. N-linked (GlcNAc...) asparagine glycosylation is present at Asn-57.

It belongs to the fungal hydrophobin family. In terms of assembly, self-assembles to form functional amyloid fibrils called rodlets. Self-assembly into fibrillar rodlets occurs spontaneously at hydrophobic:hydrophilic interfaces and the rodlets further associate laterally to form amphipathic monolayers.

The protein resides in the secreted. Its subcellular location is the cell wall. Its function is as follows. Aerial growth, conidiation, and dispersal of filamentous fungi in the environment rely upon a capability of their secreting small amphipathic proteins called hydrophobins (HPBs) with low sequence identity. Class I can self-assemble into an outermost layer of rodlet bundles on aerial cell surfaces, conferring cellular hydrophobicity that supports fungal growth, development and dispersal; whereas Class II form highly ordered films at water-air interfaces through intermolecular interactions but contribute nothing to the rodlet structure. CoH2 is an asexual monokaryon-specific class I hydrophobin that is involved in aerial growth of mycelia. This chain is Class I hydrophobin 2, found in Coprinopsis cinerea (Inky cap fungus).